The primary structure comprises 977 residues: DNA-directed RNA polymerase 3B, chloroplastic (977 aa).

The transit peptide at 1–71 (MASTASYSPS…NNIQSQTTVC (71 aa)) directs the protein to the chloroplast. Active-site residues include Asp678, Lys753, and Asp910.

Belongs to the phage and mitochondrial RNA polymerase family.

Its subcellular location is the plastid. It localises to the chloroplast. The enzyme catalyses RNA(n) + a ribonucleoside 5'-triphosphate = RNA(n+1) + diphosphate. DNA-dependent RNA polymerase catalyzes the transcription of DNA into RNA using the four ribonucleoside triphosphates as substrates. This Nicotiana tabacum (Common tobacco) protein is DNA-directed RNA polymerase 3B, chloroplastic (RPOT3-TOM).